Here is a 715-residue protein sequence, read N- to C-terminus: Fatty acid oxidation complex subunit alpha (715 aa).

Positions 8–197 (NSQPSAFSLT…NLGLVEEAVP (190 aa)) are enoyl-CoA hydratase. Positions 313-715 (ATIKKVGVLG…MANEEQSFYS (403 aa)) are 3-hydroxyacyl-CoA dehydrogenase.

This sequence in the N-terminal section; belongs to the enoyl-CoA hydratase/isomerase family. It in the central section; belongs to the 3-hydroxyacyl-CoA dehydrogenase family. Heterotetramer of two alpha chains (FadJ) and two beta chains (FadI).

The protein localises to the cytoplasm. It catalyses the reaction a (3S)-3-hydroxyacyl-CoA = a (2E)-enoyl-CoA + H2O. The catalysed reaction is a 4-saturated-(3S)-3-hydroxyacyl-CoA = a (3E)-enoyl-CoA + H2O. The enzyme catalyses a (3S)-3-hydroxyacyl-CoA + NAD(+) = a 3-oxoacyl-CoA + NADH + H(+). It carries out the reaction (3S)-3-hydroxybutanoyl-CoA = (3R)-3-hydroxybutanoyl-CoA. Its pathway is lipid metabolism; fatty acid beta-oxidation. Catalyzes the formation of a hydroxyacyl-CoA by addition of water on enoyl-CoA. Also exhibits 3-hydroxyacyl-CoA epimerase and 3-hydroxyacyl-CoA dehydrogenase activities. This Photobacterium profundum (strain SS9) protein is Fatty acid oxidation complex subunit alpha.